A 108-amino-acid chain; its full sequence is Cytochrome c (108 aa).

4 residues coordinate heme c: Cys19, Cys22, His23, and Met85.

The protein belongs to the cytochrome c family. In terms of processing, binds 1 heme c group covalently per subunit.

Its subcellular location is the mitochondrion intermembrane space. Functionally, electron carrier protein. The oxidized form of the cytochrome c heme group can accept an electron from the heme group of the cytochrome c1 subunit of cytochrome reductase. Cytochrome c then transfers this electron to the cytochrome oxidase complex, the final protein carrier in the mitochondrial electron-transport chain. The chain is Cytochrome c from Cochliobolus lunatus (Filamentous fungus).